The sequence spans 1373 residues: Disease resistance protein RRS1 (1373 aa).

The region spanning 5 to 146 (EKDEEFVCIS…EIVRDVYETH (142 aa)) is the TIR domain. The NB-ARC domain maps to 170-421 (IGIRCVGIWG…LLEGCGFFPH (252 aa)). ATP is bound at residue 179 to 186 (GMPGIGKT). LRR repeat units lie at residues 498-522 (SEEI…AFKN), 535-553 (NPEV…HSLP), 554-575 (NELR…NFDP), 577-598 (HLVE…TKNL), 621-646 (AENL…RLLR), 665-688 (PPNI…TVKP), 742-766 (LPNM…SIQG), 768-793 (PRFL…SLEI), and 831-854 (PRNL…PLSL). The Nuclear localization signal motif lies at 988–1005 (RNFHCWAPGKVVPKVRKD). The segment at residues 1204–1272 (IPAIDEGDLW…YLSEHNHPRP (69 aa)) is a DNA-binding region (WRKY). Positions 1300-1323 (RVFQNKDEPNKPHLPSSSTPPGNA) are disordered.

In terms of assembly, interacts with PopP2, a R.solanacearum type III effector.

The protein localises to the nucleus. In terms of biological role, transcription factor. Interacts specifically with the W box (5'-(T)TGAC[CT]-3'), a frequently occurring elicitor-responsive cis-acting element. Also acts as a disease resistance protein involved in resistance to fungal and bacterial pathogens, including R.solanacearum, P.syringae pv. tomato and C.higginsianum. The sequence is that of Disease resistance protein RRS1 from Arabidopsis thaliana (Mouse-ear cress).